Reading from the N-terminus, the 64-residue chain is Sec-independent protein translocase protein TatA (64 aa).

Residues 10–30 form a helical membrane-spanning segment; the sequence is LVLILGIALIIFGPGKLPELG.

Belongs to the TatA/E family. In terms of assembly, forms a complex with TatC.

The protein resides in the cell membrane. Its function is as follows. Part of the twin-arginine translocation (Tat) system that transports large folded proteins containing a characteristic twin-arginine motif in their signal peptide across membranes. TatA could form the protein-conducting channel of the Tat system. The sequence is that of Sec-independent protein translocase protein TatA from Alkaliphilus oremlandii (strain OhILAs) (Clostridium oremlandii (strain OhILAs)).